A 398-amino-acid chain; its full sequence is Small ribosomal subunit protein mS29 (398 aa).

A mitochondrion-targeting transit peptide spans 1–21; sequence MMLKGITRLISRIHKLDPGRF. Positions 39–67 are disordered; sequence QVPVESPRAISRTNENDPAKHGDQHEGQH. Positions 52–66 are enriched in basic and acidic residues; the sequence is NENDPAKHGDQHEGQ. GTP contacts are provided by residues methionine 100 and 128–135; that span reads GEKGTGKT. An N6-acetyllysine mark is found at lysine 175 and lysine 207.

Belongs to the mitochondrion-specific ribosomal protein mS29 family. Component of the mitochondrial small ribosomal subunit (mt-SSU). Mature mammalian 55S mitochondrial ribosomes consist of a small (28S) and a large (39S) subunit. The 28S small subunit contains a 12S ribosomal RNA (12S mt-rRNA) and 30 different proteins. The 39S large subunit contains a 16S rRNA (16S mt-rRNA), a copy of mitochondrial valine transfer RNA (mt-tRNA(Val)), which plays an integral structural role, and 52 different proteins. Interacts with DELE1. Interacts with NOA1. In terms of tissue distribution, ubiquitous.

The protein localises to the mitochondrion. The enzyme catalyses GTP + H2O = GDP + phosphate + H(+). As a component of the mitochondrial small ribosomal subunit, it plays a role in the translation of mitochondrial mRNAs. Involved in mediating interferon-gamma-induced cell death. Displays GTPase activity in vitro. This is Small ribosomal subunit protein mS29 from Homo sapiens (Human).